A 316-amino-acid polypeptide reads, in one-letter code: Olfactory receptor 12D3 (316 aa).

The Extracellular portion of the chain corresponds to 1–23 (MENVTTMNEFLLLGLTGVQELQP). N-linked (GlcNAc...) asparagine glycosylation is present at N3. The helical transmembrane segment at 24–44 (FFFGIFLIIYLINLIGNGSIL) threads the bilayer. The Cytoplasmic portion of the chain corresponds to 45–52 (VMVVLEPQ). A helical membrane pass occupies residues 53–73 (LHSPMYFFLGNLSCLDISYSS). The Extracellular segment spans residues 74–97 (VTLPKLLVNLVCSRRAISFLGCIT). A disulfide bridge connects residues C95 and C187. Residues 98-118 (QLHFFHFLGSTEAILLAIMAF) traverse the membrane as a helical segment. The Cytoplasmic portion of the chain corresponds to 119–137 (DRFVAICNPLRYTVIMNPQ). The helical transmembrane segment at 138–158 (VCILLAAAAWLISFFYALMHS) threads the bilayer. Residues 159–195 (VMTAHLSFCGSQKLNHFFYDVKPLLELACSDTLLNQW) lie on the Extracellular side of the membrane. The helical transmembrane segment at 196–215 (LLSIVTGSISMGAFFLTLLS) threads the bilayer. Residues 216–236 (CFYVIGFLLFKNRSCRILHKA) are Cytoplasmic-facing. A helical transmembrane segment spans residues 237–257 (LSTCASHFMVVCLFYGPVGFT). Residues 258-270 (YIRPASATSMIQD) lie on the Extracellular side of the membrane. A helical transmembrane segment spans residues 271–291 (RIMAIMYSAVTPVLNPLIYTL). At 292–316 (RNKEVMMALKKIFGRKLFKDWQQHH) the chain is on the cytoplasmic side.

This sequence belongs to the G-protein coupled receptor 1 family.

It localises to the cell membrane. Its function is as follows. Odorant receptor. This chain is Olfactory receptor 12D3 (OR12D3), found in Homo sapiens (Human).